Here is a 215-residue protein sequence, read N- to C-terminus: Ribosomal RNA small subunit methyltransferase G (215 aa).

S-adenosyl-L-methionine-binding residues include glycine 71, leucine 76, and arginine 135.

Belongs to the methyltransferase superfamily. RNA methyltransferase RsmG family.

Its subcellular location is the cytoplasm. Functionally, specifically methylates the N7 position of a guanine in 16S rRNA. In Salinibacter ruber (strain DSM 13855 / M31), this protein is Ribosomal RNA small subunit methyltransferase G.